We begin with the raw amino-acid sequence, 214 residues long: UPF0056 membrane protein aq_540 (214 aa).

6 helical membrane-spanning segments follow: residues 17 to 37 (FLSLLAIMNPFSSVPVVISLM), 47 to 67 (VIALKASVYAFFILTFFLISG), 73 to 93 (FMGITLPAFKVGGGILLFLIA), 122 to 142 (LIPLAMPLLAGPGSITTVLVL), 153 to 173 (VALFCAIFLSSFTAFVVYSLS), and 185 to 205 (INLITRISGILLLAISVQFVV).

It belongs to the UPF0056 (MarC) family.

It is found in the cell membrane. This is UPF0056 membrane protein aq_540 from Aquifex aeolicus (strain VF5).